Reading from the N-terminus, the 543-residue chain is Tyrosine-protein kinase Yes (543 aa).

The segment covering 1 to 20 has biased composition (basic and acidic residues); sequence MGCIKSKENKSPAIKYRPEN. Residues 1–45 form a disordered region; that stretch reads MGCIKSKENKSPAIKYRPENTPEPVSTSVSHYGAEPTTVSPCPSS. Residue glycine 2 is the site of N-myristoyl glycine attachment. A lipid anchor (S-palmitoyl cysteine; in membrane form) is attached at cysteine 3. Position 21 is a phosphothreonine (threonine 21). Residue tyrosine 32 is modified to Phosphotyrosine. Serine 40 bears the Phosphoserine mark. The region spanning 91 to 152 is the SH3 domain; it reads GGVTIFVALY…PSNYVAPADS (62 aa). Residues 158-255 form the SH2 domain; sequence WYFGKMGRKD…GLCHKLTTVC (98 aa). Positions 277 to 530 constitute a Protein kinase domain; it reads LRLEVKLGQG…YIQSFLEDYF (254 aa). ATP-binding positions include 283–291 and lysine 305; that span reads LGQGCFGEV. Phosphotyrosine occurs at positions 336 and 345. The active-site Proton acceptor is the aspartate 396. At tyrosine 426 the chain carries Phosphotyrosine; by autocatalysis. A Phosphotyrosine modification is found at tyrosine 446. At tyrosine 537 the chain carries Phosphotyrosine; by CSK.

It belongs to the protein kinase superfamily. Tyr protein kinase family. SRC subfamily. Interacts with YAP1 and CSF1R. Interacts with CTNND1; this interaction allows YES1-mediated activation of FYN and FER and subsequent phosphorylation of CTNND1. Interacts with FASLG. Interacts with IL6ST/gp130. Interacts with SCRIB, when YES1 is in a closed conformation; the interaction facilitates YES1 autophosphorylation. In terms of processing, phosphorylated. Phosphorylation by CSK on the C-terminal tail maintains the enzyme in an inactive state. Autophosphorylation at Tyr-426 maintains enzyme activity by blocking CSK-mediated inhibition. Palmitoylation at Cys-3 promotes membrane localization. Expressed in the epithelial cells of renal proximal tubules and stomach as well as hematopoietic cells in the bone marrow and spleen in the fetal tissues. In adult, expressed in epithelial cells of the renal proximal tubules and present in keratinocytes in the basal epidermal layer of epidermis.

The protein resides in the cell membrane. The protein localises to the cytoplasm. It is found in the cytoskeleton. Its subcellular location is the microtubule organizing center. It localises to the centrosome. The protein resides in the cytosol. The protein localises to the cell junction. It catalyses the reaction L-tyrosyl-[protein] + ATP = O-phospho-L-tyrosyl-[protein] + ADP + H(+). In terms of biological role, non-receptor protein tyrosine kinase that is involved in the regulation of cell growth and survival, apoptosis, cell-cell adhesion, cytoskeleton remodeling, and differentiation. Stimulation by receptor tyrosine kinases (RTKs) including EGFR, PDGFR, CSF1R and FGFR leads to recruitment of YES1 to the phosphorylated receptor, and activation and phosphorylation of downstream substrates. Upon EGFR activation, promotes the phosphorylation of PARD3 to favor epithelial tight junction assembly. Participates in the phosphorylation of specific junctional components such as CTNND1 by stimulating the FYN and FER tyrosine kinases at cell-cell contacts. Upon T-cell stimulation by CXCL12, phosphorylates collapsin response mediator protein 2/DPYSL2 and induces T-cell migration. Participates in CD95L/FASLG signaling pathway and mediates AKT-mediated cell migration. Plays a role in cell cycle progression by phosphorylating the cyclin-dependent kinase 4/CDK4 thus regulating the G1 phase. Also involved in G2/M progression and cytokinesis. Catalyzes phosphorylation of organic cation transporter OCT2 which induces its transport activity. The protein is Tyrosine-protein kinase Yes (YES1) of Homo sapiens (Human).